Here is a 516-residue protein sequence, read N- to C-terminus: Nucleolar complex protein 4 homolog (516 aa).

The next 3 helical transmembrane spans lie at 297–317, 347–367, and 375–395; these read ACDL…ILIH, FFHL…LVAA, and LALT…CNLL.

This sequence belongs to the CBF/MAK21 family.

It localises to the nucleus membrane. The protein localises to the nucleus. Its subcellular location is the nucleolus. This is Nucleolar complex protein 4 homolog (NOC4L) from Homo sapiens (Human).